A 507-amino-acid polypeptide reads, in one-letter code: Transcription factor CP2 (507 aa).

A Grh/CP2 DB domain is found at 61 to 300 (ENKILPFQYV…SPGFNSSHNS (240 aa)). The DNA-binding stretch occupies residues 133-395 (EHQQLEGWRW…LFNALKGRMV (263 aa)). Disordered stretches follow at residues 240–268 (PKGA…YQPS) and 296–316 (SSHN…QPEP). Positions 241–265 (KGADRKQKTDREKMEKRTPQEKEKY) are enriched in basic and acidic residues.

The protein belongs to the grh/CP2 family. CP2 subfamily. Component of the SSP (stage selector protein) complex, which appears to be a heteromer of TFCP2 and 2 copies of NFE4.

It is found in the nucleus. In terms of biological role, may function as a transcription factor. This chain is Transcription factor CP2 (tfcp2), found in Xenopus tropicalis (Western clawed frog).